The following is a 573-amino-acid chain: MLRLPAVLRQIRPVSRALAPHLTRAYAKDVKFGADARALMLQGVDLLADAVAVTMGPKGRTVIIEQSWGSPKVTKDGVTVAKAIDLKDKYKNIGAKLVQDVANNTNEEAGDGTTTATVLARAIAKEGFEKISKGANPVEIRRGVMLAVDAITAELKKLSKPVTTPEEIAQVATISANGDQEIGNIISDAMKKVGRKGVITVKDGKTLNDELEIIEGMKFDRGYISPYFINTAKGQKCEFQDAYVLISEKKISSVQSIVPALEIANSHRKPLVIIAEDVDGEALSTLVLNRLKVGLQVVAVKAPGFGDNRKNQLKDMAIATGGAVFGEEGLSLNVEDIQPHDFGKVGEVIVTKDDTMLLKGKGEKAQIEKRIQEIIEQLEVTTSEYEKEKLNERLAKLSDGVAVLKVGGTSDVEVNEKKDRVTDALNATRAAVEEGIVPGGGCALLRCIPALDALKPANEDQKIGIEIIKRTLKIPAMTIAKNAGVEGSLIVEKILQSSSEVGYDAMLGEFVNMVEKGIIDPTKVVRTALMDAAGVASLLSTAEAVVTEVPKEEKEPAMGGMGGMGGGMGGGMF.

Residues 1 to 26 constitute a mitochondrion transit peptide; sequence MLRLPAVLRQIRPVSRALAPHLTRAY. Residues lysine 75 and 111–115 each bind ATP; that span reads DGTTT. Phosphotyrosine is present on tyrosine 227. ATP contacts are provided by glycine 440 and aspartate 520.

It localises to the mitochondrion matrix. It carries out the reaction ATP + H2O + a folded polypeptide = ADP + phosphate + an unfolded polypeptide.. Its function is as follows. Chaperonin implicated in mitochondrial protein import and macromolecular assembly. Together with Hsp10, facilitates the correct folding of imported proteins. May also prevent misfolding and promote the refolding and proper assembly of unfolded polypeptides generated under stress conditions in the mitochondrial matrix. The functional units of these chaperonins consist of heptameric rings of the large subunit Hsp60, which function as a back-to-back double ring. In a cyclic reaction, Hsp60 ring complexes bind one unfolded substrate protein per ring, followed by the binding of ATP and association with 2 heptameric rings of the co-chaperonin Hsp10. This leads to sequestration of the substrate protein in the inner cavity of Hsp60 where, for a certain period of time, it can fold undisturbed by other cell components. Synchronous hydrolysis of ATP in all Hsp60 subunits results in the dissociation of the chaperonin rings and the release of ADP and the folded substrate protein. The polypeptide is 60 kDa heat shock protein, mitochondrial (Gallus gallus (Chicken)).